Here is an 88-residue protein sequence, read N- to C-terminus: FXYD domain-containing ion transport regulator 3 (88 aa).

The signal sequence occupies residues 1-17 (MHEVALSVLILLAGLSA). Over 18 to 38 (LDANDPEDKNSPFYYDWHSLR) the chain is Extracellular. A helical membrane pass occupies residues 39 to 59 (VGGLICAGTPCALGIIILLSG). Residues 60-88 (KCKCKFSQKPSHRPGDAPPLITPGSAHDC) are Cytoplasmic-facing. The interval 66-88 (SQKPSHRPGDAPPLITPGSAHDC) is disordered.

It belongs to the FXYD family. In terms of assembly, regulatory subunit of the sodium/potassium-transporting ATPase which is composed of a catalytic alpha subunit, a non-catalytic beta subunit and an additional regulatory subunit. Interacts with catalytic alpha subunit ATP1A1. Also interacts with non-catalytic beta subunit ATP1B1. Interacts with the alpha1-beta1, alpha2-beta1 and alpha3-beta1 NKA isozymes. Glutathionylated.

Its subcellular location is the cell membrane. Functionally, associates with and regulates the activity of the sodium/potassium-transporting ATPase (NKA) which transports Na(+) out of the cell and K(+) into the cell. Reduces glutathionylation of the NKA beta-1 subunit ATP1B1, thus reversing glutathionylation-mediated inhibition of ATP1B1. Induces a hyperpolarization-activated chloride current when expressed in Xenopus oocytes. The polypeptide is FXYD domain-containing ion transport regulator 3 (FXYD3) (Sus scrofa (Pig)).